A 395-amino-acid chain; its full sequence is NAD(P)H-quinone oxidoreductase subunit H (395 aa).

It belongs to the complex I 49 kDa subunit family. In terms of assembly, NDH-1 can be composed of about 15 different subunits; different subcomplexes with different compositions have been identified which probably have different functions.

It is found in the cellular thylakoid membrane. The catalysed reaction is a plastoquinone + NADH + (n+1) H(+)(in) = a plastoquinol + NAD(+) + n H(+)(out). It catalyses the reaction a plastoquinone + NADPH + (n+1) H(+)(in) = a plastoquinol + NADP(+) + n H(+)(out). Functionally, NDH-1 shuttles electrons from an unknown electron donor, via FMN and iron-sulfur (Fe-S) centers, to quinones in the respiratory and/or the photosynthetic chain. The immediate electron acceptor for the enzyme in this species is believed to be plastoquinone. Couples the redox reaction to proton translocation, and thus conserves the redox energy in a proton gradient. Cyanobacterial NDH-1 also plays a role in inorganic carbon-concentration. This Prochlorococcus marinus (strain MIT 9301) protein is NAD(P)H-quinone oxidoreductase subunit H.